Reading from the N-terminus, the 376-residue chain is Drebrin-like protein B (376 aa).

The ADF-H domain maps to 2–133 (SVNLSKNGAA…EPESIMEKVA (132 aa)). Residues 175–231 (KENFWAKAEKDEEERRIEEHRRANVEKDRLERERKEREQREAEERERRFRERSKEID) adopt a coiled-coil conformation. Positions 202–242 (DRLERERKEREQREAEERERRFRERSKEIDGHRKQQEEVEK) are enriched in basic and acidic residues. The segment at 202–288 (DRLERERKER…FTASQQEEEN (87 aa)) is disordered. Positions 268 to 283 (ESGSVSAQPEQFTASQ) are enriched in polar residues. Positions 317 to 376 (DSGMCARALYDYQAADDTEISFDPDDVIIQIEMIDDGWWRGVAPSGHFGMFPANYVELLE) constitute an SH3 domain.

Belongs to the ABP1 family.

The protein localises to the cytoplasm. Its subcellular location is the cytoskeleton. It localises to the cell projection. It is found in the lamellipodium. The protein resides in the ruffle. The protein localises to the cell cortex. Its subcellular location is the cytosol. It localises to the synapse. It is found in the perikaryon. The protein resides in the neuron projection. The protein localises to the cell membrane. Its subcellular location is the cytoplasmic vesicle. It localises to the clathrin-coated vesicle membrane. It is found in the golgi apparatus membrane. The protein resides in the podosome. The protein localises to the early endosome. Its subcellular location is the dendrite. It localises to the postsynaptic density. Its function is as follows. Adapter protein that binds F-actin and dynamin, and thereby plays a role in receptor-mediated endocytosis. Plays a role in the reorganization of the actin cytoskeleton, formation of cell projections, such as neurites, in neuron morphogenesis and synapse formation. Does not bind G-actin and promote actin polymerization by itself, but excerts its functions by interaction with other proteins. Required for the formation of organized podosome rosettes. The sequence is that of Drebrin-like protein B (dbnl-b) from Xenopus laevis (African clawed frog).